The following is a 350-amino-acid chain: Small ribosomal subunit biogenesis GTPase RsgA (350 aa).

Residues 1-17 are compositionally biased toward polar residues; that stretch reads MSKNKLSKGQQRRVNAN. Residues 1-33 form a disordered region; the sequence is MSKNKLSKGQQRRVNANHQRRLKTSKEKPDYDD. The 170-residue stretch at 104 to 273 folds into the CP-type G domain; the sequence is TSVLTRPDFY…VIDSPGVREF (170 aa). GTP-binding positions include 160-163 and 214-222; these read NKID and GQSGVGKSS. Residues Cys-297, Cys-302, His-304, and Cys-310 each contribute to the Zn(2+) site.

It belongs to the TRAFAC class YlqF/YawG GTPase family. RsgA subfamily. Monomer. Associates with 30S ribosomal subunit, binds 16S rRNA. Zn(2+) serves as cofactor.

The protein localises to the cytoplasm. Functionally, one of several proteins that assist in the late maturation steps of the functional core of the 30S ribosomal subunit. Helps release RbfA from mature subunits. May play a role in the assembly of ribosomal proteins into the subunit. Circularly permuted GTPase that catalyzes slow GTP hydrolysis, GTPase activity is stimulated by the 30S ribosomal subunit. This Shigella flexneri protein is Small ribosomal subunit biogenesis GTPase RsgA.